Consider the following 351-residue polypeptide: Holliday junction branch migration complex subunit RuvB (351 aa).

The large ATPase domain (RuvB-L) stretch occupies residues 1–186; it reads MDEKIETRLI…FGIVQRLEFY (186 aa). Residues isoleucine 25, arginine 26, glycine 67, lysine 70, threonine 71, threonine 72, 133–135, arginine 176, tyrosine 186, and arginine 223 contribute to the ATP site; that span reads EDF. Threonine 71 contributes to the Mg(2+) binding site. The tract at residues 187-257 is small ATPAse domain (RuvB-S); the sequence is RIPDLIHIVK…IAKEALDLLN (71 aa). A head domain (RuvB-H) region spans residues 260 to 351; the sequence is IRGLDVMDRK…ENFDLLGKVE (92 aa). DNA contacts are provided by arginine 296, arginine 315, and arginine 320.

This sequence belongs to the RuvB family. Homohexamer. Forms an RuvA(8)-RuvB(12)-Holliday junction (HJ) complex. HJ DNA is sandwiched between 2 RuvA tetramers; dsDNA enters through RuvA and exits via RuvB. An RuvB hexamer assembles on each DNA strand where it exits the tetramer. Each RuvB hexamer is contacted by two RuvA subunits (via domain III) on 2 adjacent RuvB subunits; this complex drives branch migration. In the full resolvosome a probable DNA-RuvA(4)-RuvB(12)-RuvC(2) complex forms which resolves the HJ.

It localises to the cytoplasm. The catalysed reaction is ATP + H2O = ADP + phosphate + H(+). The RuvA-RuvB-RuvC complex processes Holliday junction (HJ) DNA during genetic recombination and DNA repair, while the RuvA-RuvB complex plays an important role in the rescue of blocked DNA replication forks via replication fork reversal (RFR). RuvA specifically binds to HJ cruciform DNA, conferring on it an open structure. The RuvB hexamer acts as an ATP-dependent pump, pulling dsDNA into and through the RuvAB complex. RuvB forms 2 homohexamers on either side of HJ DNA bound by 1 or 2 RuvA tetramers; 4 subunits per hexamer contact DNA at a time. Coordinated motions by a converter formed by DNA-disengaged RuvB subunits stimulates ATP hydrolysis and nucleotide exchange. Immobilization of the converter enables RuvB to convert the ATP-contained energy into a lever motion, pulling 2 nucleotides of DNA out of the RuvA tetramer per ATP hydrolyzed, thus driving DNA branch migration. The RuvB motors rotate together with the DNA substrate, which together with the progressing nucleotide cycle form the mechanistic basis for DNA recombination by continuous HJ branch migration. Branch migration allows RuvC to scan DNA until it finds its consensus sequence, where it cleaves and resolves cruciform DNA. In Coxiella burnetii (strain RSA 331 / Henzerling II), this protein is Holliday junction branch migration complex subunit RuvB.